We begin with the raw amino-acid sequence, 98 residues long: MFAIVRTGGKQYRVAAGDKIAVEKLAGEAGDKITLGEVLLAGEGDSLADAAKVTVSAEIIAQAKSEKVIVFKKRRRHNYRRRNGHRQQMTLLRIVSVA.

Belongs to the bacterial ribosomal protein bL21 family. As to quaternary structure, part of the 50S ribosomal subunit. Contacts protein L20.

This protein binds to 23S rRNA in the presence of protein L20. The chain is Large ribosomal subunit protein bL21 from Novosphingobium aromaticivorans (strain ATCC 700278 / DSM 12444 / CCUG 56034 / CIP 105152 / NBRC 16084 / F199).